The primary structure comprises 132 residues: Small ribosomal subunit protein uS9 (132 aa).

Belongs to the universal ribosomal protein uS9 family.

The polypeptide is Small ribosomal subunit protein uS9 (rpsI) (Mycoplasma pneumoniae (strain ATCC 29342 / M129 / Subtype 1) (Mycoplasmoides pneumoniae)).